Reading from the N-terminus, the 95-residue chain is CRISPR-associated endoribonuclease Cas2 1 (95 aa).

Residue Asp-8 coordinates Mg(2+).

Belongs to the CRISPR-associated endoribonuclease Cas2 protein family. In terms of assembly, homodimer, forms a heterotetramer with a Cas1 homodimer. Mg(2+) is required as a cofactor.

In terms of biological role, CRISPR (clustered regularly interspaced short palindromic repeat), is an adaptive immune system that provides protection against mobile genetic elements (viruses, transposable elements and conjugative plasmids). CRISPR clusters contain sequences complementary to antecedent mobile elements and target invading nucleic acids. CRISPR clusters are transcribed and processed into CRISPR RNA (crRNA). Functions as a ssRNA-specific endoribonuclease. Involved in the integration of spacer DNA into the CRISPR cassette. This Pyrobaculum aerophilum (strain ATCC 51768 / DSM 7523 / JCM 9630 / CIP 104966 / NBRC 100827 / IM2) protein is CRISPR-associated endoribonuclease Cas2 1.